Reading from the N-terminus, the 293-residue chain is CDP-abequose synthase (293 aa).

Residue T113 coordinates substrate. The active-site Proton acceptor is the Y130.

This sequence belongs to the NAD(P)-dependent epimerase/dehydratase family.

It catalyses the reaction CDP-alpha-D-abequose + NADP(+) = CDP-4-dehydro-3,6-dideoxy-alpha-D-glucose + NADPH + H(+). It participates in bacterial outer membrane biogenesis; LPS O-antigen biosynthesis. The protein is CDP-abequose synthase of Salmonella muenchen.